Reading from the N-terminus, the 309-residue chain is Vacuolar membrane protein YOR292C (309 aa).

Residues 1–52 (MPLQLFGRDQIVVHYDNGNMSNDDQNHQSVLGSWTRRAAAALRTLMNKRIQR) are Vacuolar-facing. N-linked (GlcNAc...) asparagine glycosylation occurs at Asn-19. A helical transmembrane segment spans residues 53-73 (ITLTHWLLLVIWVTSLWKFTS). Over 74–81 (HYRQLYAN) the chain is Cytoplasmic. The helical transmembrane segment at 82-102 (SAVFATLCTNILLFGISDILA) threads the bilayer. Residues 103 to 183 (QSIACFYSYH…KTDTFDFFRW (81 aa)) lie on the Vacuolar side of the membrane. Residue Asn-121 is glycosylated (N-linked (GlcNAc...) asparagine). The helical transmembrane segment at 184–204 (GCFMFWGFFISFFQAPWYKFL) threads the bilayer. At 205–225 (NFFYTEDPTVVQVFERVLSDQ) the chain is on the cytoplasmic side. Residues 226–246 (LLYSPISLYCFFMFSNYVMEG) form a helical membrane-spanning segment. Topologically, residues 247–260 (GDKDTLGKKIQRLY) are vacuolar. The chain crosses the membrane as a helical span at residues 261–281 (ISTLGCNYLVWPMVQFINFLI). Over 282 to 309 (MPRDFQAPFSSSVGVVWNCFLSMRNASK) the chain is Cytoplasmic.

Belongs to the peroxisomal membrane protein PXMP2/4 family. In terms of processing, N-glycosylated.

It is found in the vacuole membrane. In Saccharomyces cerevisiae (strain ATCC 204508 / S288c) (Baker's yeast), this protein is Vacuolar membrane protein YOR292C.